The following is a 218-amino-acid chain: Pyridoxine/pyridoxamine 5'-phosphate oxidase (218 aa).

Substrate-binding positions include 12 to 15 (RLSY) and Arg-70. Residues 65 to 70 (RTVLLR), 80 to 81 (YT), Lys-87, and Gln-109 each bind FMN. The substrate site is built by Tyr-127, Arg-131, and Ser-135. FMN-binding positions include 145–146 (QS) and Trp-191. 197 to 199 (RLH) lines the substrate pocket. Residue Arg-201 coordinates FMN.

Belongs to the pyridoxamine 5'-phosphate oxidase family. Homodimer. Requires FMN as cofactor.

It carries out the reaction pyridoxamine 5'-phosphate + O2 + H2O = pyridoxal 5'-phosphate + H2O2 + NH4(+). The catalysed reaction is pyridoxine 5'-phosphate + O2 = pyridoxal 5'-phosphate + H2O2. Its pathway is cofactor metabolism; pyridoxal 5'-phosphate salvage; pyridoxal 5'-phosphate from pyridoxamine 5'-phosphate: step 1/1. It functions in the pathway cofactor metabolism; pyridoxal 5'-phosphate salvage; pyridoxal 5'-phosphate from pyridoxine 5'-phosphate: step 1/1. Functionally, catalyzes the oxidation of either pyridoxine 5'-phosphate (PNP) or pyridoxamine 5'-phosphate (PMP) into pyridoxal 5'-phosphate (PLP). This Acinetobacter baumannii (strain SDF) protein is Pyridoxine/pyridoxamine 5'-phosphate oxidase.